A 516-amino-acid polypeptide reads, in one-letter code: Prolyl 4-hydroxylase subunit alpha-1 (516 aa).

N-linked (GlcNAc...) asparagine glycosylation is present at Asn97. The TPR repeat unit spans residues 189 to 222; the sequence is VYILDYLSYAVYQQGDLSKAMMLTKRLLELDPEH. Residue Asn243 is glycosylated (N-linked (GlcNAc...) asparagine). A Fe2OG dioxygenase domain is found at 393-501; the sequence is TAEELQVANY…KWVSNKWLHE (109 aa). Positions 411, 413, and 482 each coordinate Fe cation. Residue Lys492 participates in 2-oxoglutarate binding.

The protein belongs to the P4HA family. Heterotetramer of two alpha chains and two beta chains (the beta chain is the multi-functional PDI). Fe(2+) serves as cofactor. The cofactor is L-ascorbate.

It is found in the endoplasmic reticulum lumen. The catalysed reaction is L-prolyl-[collagen] + 2-oxoglutarate + O2 = trans-4-hydroxy-L-prolyl-[collagen] + succinate + CO2. Catalyzes the post-translational formation of 4-hydroxyproline in -Xaa-Pro-Gly- sequences in collagens and other proteins. This chain is Prolyl 4-hydroxylase subunit alpha-1 (P4HA1), found in Gallus gallus (Chicken).